Reading from the N-terminus, the 291-residue chain is 4-diphosphocytidyl-2-C-methyl-D-erythritol kinase (291 aa).

Residue Lys-10 is part of the active site. 100–110 (PIGGGLGGGSS) contacts ATP. Residue Asp-142 is part of the active site.

It belongs to the GHMP kinase family. IspE subfamily. In terms of assembly, homodimer.

It carries out the reaction 4-CDP-2-C-methyl-D-erythritol + ATP = 4-CDP-2-C-methyl-D-erythritol 2-phosphate + ADP + H(+). It participates in isoprenoid biosynthesis; isopentenyl diphosphate biosynthesis via DXP pathway; isopentenyl diphosphate from 1-deoxy-D-xylulose 5-phosphate: step 3/6. Its function is as follows. Catalyzes the phosphorylation of the position 2 hydroxy group of 4-diphosphocytidyl-2C-methyl-D-erythritol. In Hamiltonella defensa subsp. Acyrthosiphon pisum (strain 5AT), this protein is 4-diphosphocytidyl-2-C-methyl-D-erythritol kinase.